The sequence spans 180 residues: ADP-ribosylation factor 5 (180 aa).

Residue glycine 2 is the site of N-myristoyl glycine attachment. GTP-binding positions include 24 to 31, 67 to 71, and 126 to 129; these read GLDAAGKT, DVGGQ, and NKQD.

This sequence belongs to the small GTPase superfamily. Arf family.

Its subcellular location is the golgi apparatus. GTP-binding protein involved in protein trafficking; may modulate vesicle budding and uncoating within the Golgi apparatus. In Gallus gallus (Chicken), this protein is ADP-ribosylation factor 5 (ARF5).